A 320-amino-acid polypeptide reads, in one-letter code: Acyl-coenzyme A thioesterase 8 (320 aa).

Catalysis depends on charge relay system residues Asp-233, Ser-255, and Gln-305. Residues 318-320 carry the Microbody targeting signal motif; it reads SKL.

Belongs to the C/M/P thioester hydrolase family. Homodimer. Ubiquitous.

The protein resides in the peroxisome matrix. The catalysed reaction is choloyl-CoA + H2O = cholate + CoA + H(+). It catalyses the reaction chenodeoxycholoyl-CoA + H2O = chenodeoxycholate + CoA + H(+). It carries out the reaction acetyl-CoA + H2O = acetate + CoA + H(+). The enzyme catalyses malonyl-CoA + H2O = malonate + CoA + H(+). The catalysed reaction is acetoacetyl-CoA + H2O = acetoacetate + CoA + H(+). It catalyses the reaction propanoyl-CoA + H2O = propanoate + CoA + H(+). It carries out the reaction butanoyl-CoA + H2O = butanoate + CoA + H(+). The enzyme catalyses succinyl-CoA + H2O = succinate + CoA + H(+). The catalysed reaction is glutaryl-CoA + H2O = glutarate + CoA + H(+). It catalyses the reaction hexanoyl-CoA + H2O = hexanoate + CoA + H(+). It carries out the reaction hexanedioyl-CoA + H2O = hexanedioate + CoA + H(+). The enzyme catalyses octanoyl-CoA + H2O = octanoate + CoA + H(+). The catalysed reaction is octanedioyl-CoA + H2O = octanedioate + CoA + H(+). It catalyses the reaction decanoyl-CoA + H2O = decanoate + CoA + H(+). It carries out the reaction decanedioyl-CoA + H2O = decanedioate + CoA + H(+). The enzyme catalyses dodecanoyl-CoA + H2O = dodecanoate + CoA + H(+). The catalysed reaction is dodecanedioyl-CoA + H2O = dodecanedioate + CoA + H(+). It catalyses the reaction tetradecanoyl-CoA + H2O = tetradecanoate + CoA + H(+). It carries out the reaction (9Z)-tetradecenoyl-CoA + H2O = (9Z)-tetradecenoate + CoA + H(+). The enzyme catalyses hexadecanoyl-CoA + H2O = hexadecanoate + CoA + H(+). The catalysed reaction is (9Z)-hexadecenoyl-CoA + H2O = (9Z)-hexadecenoate + CoA + H(+). It catalyses the reaction octadecanoyl-CoA + H2O = octadecanoate + CoA + H(+). It carries out the reaction (9Z)-octadecenoyl-CoA + H2O = (9Z)-octadecenoate + CoA + H(+). The enzyme catalyses (9Z,12Z)-octadecadienoyl-CoA + H2O = (9Z,12Z)-octadecadienoate + CoA + H(+). The catalysed reaction is eicosanoyl-CoA + H2O = eicosanoate + CoA + H(+). It catalyses the reaction (5Z,8Z,11Z,14Z)-eicosatetraenoyl-CoA + H2O = (5Z,8Z,11Z,14Z)-eicosatetraenoate + CoA + H(+). It carries out the reaction 4,8-dimethylnonanoyl-CoA + H2O = 4,8-dimethylnonanoate + CoA + H(+). The enzyme catalyses 2,6-dimethylheptanoyl-CoA + H2O = 2,6-dimethylheptanoate + CoA + H(+). The catalysed reaction is (3S)-3-hydroxy-3-methylglutaryl-CoA + H2O = 3-hydroxy-3-methylglutarate + CoA + H(+). It catalyses the reaction 3alpha,7alpha,12alpha-trihydroxy-5beta-cholestan-26-oyl-CoA + H2O = 3alpha,7alpha,12alpha-trihydroxy-5beta-cholestan-26-oate + CoA + H(+). It carries out the reaction 2-methyloctadecanoyl-CoA + H2O = 2-methyloctadecanoate + CoA + H(+). The enzyme catalyses prostaglandin F2alpha-CoA + H2O = prostaglandin F2alpha + CoA + H(+). It participates in lipid metabolism; fatty acid metabolism. Its activity is regulated as follows. Inhibited by CoASH (IC(50)=10-15 uM). Also inhibited by cysteine-reactive agents. In terms of biological role, catalyzes the hydrolysis of acyl-CoAs into free fatty acids and coenzyme A (CoASH), regulating their respective intracellular levels. Displays no strong substrate specificity with respect to the carboxylic acid moiety of Acyl-CoAs. Hydrolyzes medium length (C2 to C20) straight-chain, saturated and unsaturated acyl-CoAS but is inactive towards substrates with longer aliphatic chains. Moreover, it catalyzes the hydrolysis of CoA esters of bile acids, such as choloyl-CoA and chenodeoxycholoyl-CoA and competes with bile acid CoA:amino acid N-acyltransferase (BAAT). Is also able to hydrolyze CoA esters of dicarboxylic acids. It is involved in the metabolic regulation of peroxisome proliferation. This is Acyl-coenzyme A thioesterase 8 (Acot8) from Mus musculus (Mouse).